The primary structure comprises 214 residues: Adenylate kinase (214 aa).

10-15 (GAGKGT) is an ATP binding site. Positions 30–59 (STGDMFRAALKNQTPLGLKAKEYMDKGELV) are NMP. Residues threonine 31, arginine 36, 57 to 59 (ELV), 85 to 88 (GFPR), and glutamine 92 each bind AMP. The tract at residues 126–163 (GRRVCRQCGATYHVKFNPPKVEGVCDACGGELYQRSDD) is LID. Arginine 127 is a binding site for ATP. Residues cysteine 130 and cysteine 133 each contribute to the Zn(2+) site. 136–137 (TY) provides a ligand contact to ATP. Cysteine 150 and cysteine 153 together coordinate Zn(2+). Positions 160 and 171 each coordinate AMP. Lysine 199 contacts ATP.

It belongs to the adenylate kinase family. Monomer.

It localises to the cytoplasm. It catalyses the reaction AMP + ATP = 2 ADP. Its pathway is purine metabolism; AMP biosynthesis via salvage pathway; AMP from ADP: step 1/1. Functionally, catalyzes the reversible transfer of the terminal phosphate group between ATP and AMP. Plays an important role in cellular energy homeostasis and in adenine nucleotide metabolism. The sequence is that of Adenylate kinase from Carboxydothermus hydrogenoformans (strain ATCC BAA-161 / DSM 6008 / Z-2901).